The chain runs to 358 residues: Phosphoribosyl pyrophosphate synthase-associated protein 2 (358 aa).

The protein belongs to the ribose-phosphate pyrophosphokinase family.

Its function is as follows. Seems to play a negative regulatory role in 5-phosphoribose 1-diphosphate synthesis. The chain is Phosphoribosyl pyrophosphate synthase-associated protein 2 (prpsap2) from Xenopus tropicalis (Western clawed frog).